Here is a 2259-residue protein sequence, read N- to C-terminus: Putative Polycomb group protein ASXL3 (2259 aa).

An HTH HARE-type domain is found at 10-83 (RTWAEAARLA…KSGLYALRKE (74 aa)). Positions 181–230 (VVLTPLKVSDEQSDSPSGSESKNGEADSSDKEMKHGQKSPTGKQTSQHLK) are disordered. Over residues 202–215 (KNGEADSSDKEMKH) the composition is skewed to basic and acidic residues. Residues 218 to 227 (KSPTGKQTSQ) show a composition bias toward polar residues. In terms of domain architecture, DEUBAD spans 253-362 (PGSILVNTNL…FERFYGERSG (110 aa)). Disordered stretches follow at residues 364 to 399 (SREE…AQNA), 607 to 643 (CISE…CTPA), 703 to 810 (EASP…IPEP), 857 to 1012 (SEMT…PLKI), 1025 to 1049 (SQPV…NTGA), 1126 to 1150 (RLPS…TKME), 1433 to 1462 (LSGE…GGFV), 1614 to 1643 (DPMR…GLKA), 1687 to 1719 (DFPG…TTSP), and 1993 to 2075 (NMLS…TTKR). Composition is skewed to polar residues over residues 607-617 (CISETSFSSES), 630-643 (GETQ…CTPA), and 703-717 (EASP…SEAS). Residues 722–741 (LPPTSETSSESSMPLTSETP) show a composition bias toward low complexity. 2 stretches are compositionally biased toward polar residues: residues 770-781 (KSPSGSEEANSP) and 926-945 (QSST…SEPS). 2 stretches are compositionally biased toward basic and acidic residues: residues 949-985 (DGIR…DDQS) and 995-1006 (PEKEQPPREEPR). The span at 1034–1043 (RASTSTSVSS) shows a compositional bias: low complexity. Residues 1437–1448 (NLDNNSGPLNRT) show a composition bias toward polar residues. Polar residues predominate over residues 1699-1719 (EVTSSASVQPTQTMKPSTTSP). Residues 2023-2055 (PLPPPPPPPPPPPPPLALPPPPPPPPPLPPPLP) are compositionally biased toward pro residues. The PHD-type; atypical zinc finger occupies 2221–2258 (ELKCSCRLKAMIVCKGCGAFCHDDCIGPSKLCVACLVV).

It belongs to the Asx family. Core component of the polycomb repressive deubiquitinase (PR-DUB) complex, at least composed of BAP1, one of ASXL1, ASXL2 or (probably) ASXL3, and one of MBD5 or MBD6. Distinct combinations of ASXL and MBD proteins may preferentially bind specific histone modification marks. The PR-DUB core associates with a number of accessory proteins, including FOXK1, FOXK2, KDM1B, HCFC1 and OGT; KDM1B specifically associates with ASXL2 PR-DUB complexes. Interacts (via PHD domain) with MBD5 and MBD6 (via MBD domain); the interaction is probably direct and mediates association of MBD proteins with the PR-DUB core.

Its subcellular location is the nucleus. Putative Polycomb group (PcG) protein. PcG proteins act by forming multiprotein complexes, which are required to maintain the transcriptionally repressive state of homeotic genes throughout development. PcG proteins are not required to initiate repression, but to maintain it during later stages of development. They probably act via methylation of histones, rendering chromatin heritably changed in its expressibility. Non-catalytic component of the PR-DUB complex, a complex that specifically mediates deubiquitination of histone H2A monoubiquitinated at 'Lys-119' (H2AK119ub1). The PR-DUB complex is an epigenetic regulator of gene expression and acts as a transcriptional coactivator, affecting genes involved in development, cell communication, signaling, cell proliferation and cell viability. ASXL1, ASXL2 and ASXL3 function redundantly in the PR-DUB complex and are essential for chromatin recruitment and transcriptional activation of associated genes. This is Putative Polycomb group protein ASXL3 (Asxl3) from Mus musculus (Mouse).